A 209-amino-acid polypeptide reads, in one-letter code: U1 small nuclear ribonucleoprotein C (209 aa).

The segment at 4 to 36 (HYCDYCDVFLTHDSASVRKAHNSGRNHLANVRD) adopts a Matrin-type zinc-finger fold. Residues 72–87 (PQHLQAPPQGGFAPPM) are compositionally biased toward low complexity. The interval 72–209 (PQHLQAPPQG…RARMMGPGGR (138 aa)) is disordered. Pro residues-rich tracts occupy residues 93 to 150 (GGFP…PFPP) and 159 to 191 (PGAP…PTNP).

The protein belongs to the U1 small nuclear ribonucleoprotein C family. In terms of assembly, U1 snRNP is composed of the 7 core Sm proteins B/B', D1, D2, D3, E, F and G that assemble in a heptameric protein ring on the Sm site of the small nuclear RNA to form the core snRNP, and at least 3 U1 snRNP-specific proteins U1-70K, U1-A and U1-C. U1-C interacts with U1 snRNA and the 5' splice-site region of the pre-mRNA.

Its subcellular location is the nucleus. In terms of biological role, component of the spliceosomal U1 snRNP, which is essential for recognition of the pre-mRNA 5' splice-site and the subsequent assembly of the spliceosome. U1-C is directly involved in initial 5' splice-site recognition for both constitutive and regulated alternative splicing. The interaction with the 5' splice-site seems to precede base-pairing between the pre-mRNA and the U1 snRNA. Stimulates commitment or early (E) complex formation by stabilizing the base pairing of the 5' end of the U1 snRNA and the 5' splice-site region. The protein is U1 small nuclear ribonucleoprotein C of Coprinopsis cinerea (strain Okayama-7 / 130 / ATCC MYA-4618 / FGSC 9003) (Inky cap fungus).